Reading from the N-terminus, the 284-residue chain is Homeobox protein Hox-D13 (284 aa).

Positions 217–276 (GRKKRVPYTKTQLKELEREYATNKFITKEKRRRISTATNLTERQVTIWFQNRRVKEKKVV) form a DNA-binding region, homeobox.

It belongs to the Abd-B homeobox family.

It is found in the nucleus. Sequence-specific transcription factor that binds gene promoters and activates their transcription. Part of a developmental regulatory system that provides cells with specific positional identities on the anterior-posterior axis. This Heterodontus francisci (Horn shark) protein is Homeobox protein Hox-D13 (HOXD13).